The following is a 686-amino-acid chain: Tripartite terminase subunit 3 (686 aa).

Positions 220–227 match the Walker A motif motif; sequence IPRRHGKT. The Walker B motif signature appears at 315 to 320; that stretch reads LLFVDE. The active-site For ATPase activity is glutamate 320. Residues aspartate 474, glutamate 546, and aspartate 658 each act as for nuclease activity in the active site.

This sequence belongs to the herpesviridae TRM3 protein family. Interacts with the terminase subunits TRM1 and TRM2. Interacts with portal protein.

Its subcellular location is the host nucleus. Component of the molecular motor that translocates viral genomic DNA in empty capsid during DNA packaging. Forms a tripartite terminase complex together with TRM1 and TRM2 in the host cytoplasm. Once the complex reaches the host nucleus, it interacts with the capsid portal vertex. This portal forms a ring in which genomic DNA is translocated into the capsid. TRM3 carries an RNase H-like nuclease activity that plays an important role for the cleavage of concatemeric viral DNA into unit length genomes. This chain is Tripartite terminase subunit 3, found in Alcelaphine herpesvirus 1 (strain C500) (AlHV-1).